We begin with the raw amino-acid sequence, 281 residues long: MNRLQDDYDPYAVEEPSDEEPALSSSEDELDVLLHGTPDQKRKLIRECLTGESESSSEDEFEKEMEAELNSTMKTMEDQLSSLGTGSSSGVAKVGGVTEKFYDEIYFDSDSEDEDKTVTKKKKKKQHRIPTNDELLYDPEKDNRDQAWVDAKRRGYHAFGLQRPRQKQQPVPNSDAVLNCPACMTTLCLDCQRHESYKTQYRAMFVMNCSINREEVLRYKNPENRRKRRSAKKMRSNPEDPAEREAEEIYHPVMCTECSTEVAVYDKDEVFHFFNVLASHS.

Residue methionine 1 is modified to N-acetylmethionine. The tract at residues 1–27 (MNRLQDDYDPYAVEEPSDEEPALSSSE) is disordered. The span at 15 to 27 (EPSDEEPALSSSE) shows a compositional bias: acidic residues. Serine 17 is modified (phosphoserine). Threonine 37 carries the post-translational modification Phosphothreonine. Phosphoserine is present on residues serine 109 and serine 111. A disordered region spans residues 222–245 (PENRRKRRSAKKMRSNPEDPAERE). Residues 225–235 (RRKRRSAKKMR) are compositionally biased toward basic residues. The segment covering 236-245 (SNPEDPAERE) has biased composition (basic and acidic residues).

In terms of assembly, interacts with E2F1. The C-terminal half binds the N-terminal of E2F1. Also interacts with E2F2 and E2F3, but not E2F4.

Its subcellular location is the cytoplasm. The protein resides in the nucleus. May play an important role in the fine-tuning of both major E2F1 activities, the regulation of the cell-cycle and the induction of apoptosis. Promotes S-phase entry, and inhibits p14(ARP) expression. The chain is E2F-associated phosphoprotein (Eapp) from Mus musculus (Mouse).